Reading from the N-terminus, the 381-residue chain is Dihydroorotate dehydrogenase (quinone) (381 aa).

FMN contacts are provided by residues Ala77–Lys81 and Ala101. Lys81 contributes to the substrate binding site. Asn126 to Gly129 is a substrate binding site. Residues Asn158 and Asn191 each contribute to the FMN site. Substrate is bound at residue Asn191. Ser194 (nucleophile) is an active-site residue. Asn196 contributes to the substrate binding site. Residues Lys229 and Thr257 each contribute to the FMN site. Asn258–Thr259 lines the substrate pocket. Residues Gly287, Gly316, and Tyr337–Thr338 contribute to the FMN site.

The protein belongs to the dihydroorotate dehydrogenase family. Type 2 subfamily. In terms of assembly, monomer. The cofactor is FMN.

It is found in the cell membrane. It carries out the reaction (S)-dihydroorotate + a quinone = orotate + a quinol. The protein operates within pyrimidine metabolism; UMP biosynthesis via de novo pathway; orotate from (S)-dihydroorotate (quinone route): step 1/1. Its function is as follows. Catalyzes the conversion of dihydroorotate to orotate with quinone as electron acceptor. This is Dihydroorotate dehydrogenase (quinone) (pyrD) from Synechocystis sp. (strain ATCC 27184 / PCC 6803 / Kazusa).